A 342-amino-acid chain; its full sequence is RNA 3'-terminal phosphate cyclase (342 aa).

ATP-binding positions include Gln-102 and 283 to 287; that span reads HLADQ. Residue His-308 is the Tele-AMP-histidine intermediate of the active site.

It belongs to the RNA 3'-terminal cyclase family. Type 1 subfamily.

The protein resides in the cytoplasm. It catalyses the reaction a 3'-end 3'-phospho-ribonucleotide-RNA + ATP = a 3'-end 2',3'-cyclophospho-ribonucleotide-RNA + AMP + diphosphate. Functionally, catalyzes the conversion of 3'-phosphate to a 2',3'-cyclic phosphodiester at the end of RNA. The mechanism of action of the enzyme occurs in 3 steps: (A) adenylation of the enzyme by ATP; (B) transfer of adenylate to an RNA-N3'P to produce RNA-N3'PP5'A; (C) and attack of the adjacent 2'-hydroxyl on the 3'-phosphorus in the diester linkage to produce the cyclic end product. The biological role of this enzyme is unknown but it is likely to function in some aspects of cellular RNA processing. The sequence is that of RNA 3'-terminal phosphate cyclase from Pseudomonas fluorescens (strain ATCC BAA-477 / NRRL B-23932 / Pf-5).